Consider the following 500-residue polypeptide: Pyruvate kinase 1 (500 aa).

Ser2 carries the post-translational modification N-acetylserine. Phosphoserine is present on residues Ser9 and Ser16. Phosphothreonine is present on Thr31. Arg49 provides a ligand contact to substrate. The K(+) site is built by Asn51 and Ser53. 51 to 54 lines the ATP pocket; it reads NFSH. The residue at position 70 (Ser70) is a Phosphoserine. Residues Asp84 and Thr85 each contribute to the K(+) site. Arg91 provides a ligand contact to ATP. Glycyl lysine isopeptide (Lys-Gly) (interchain with G-Cter in URM1) cross-links involve residues Lys119, Lys124, Lys161, Lys164, and Lys166. Lys177 contacts ATP. Thr184 carries the post-translational modification Phosphothreonine. A Glycyl lysine isopeptide (Lys-Gly) (interchain with G-Cter in ubiquitin) cross-link involves residue Lys204. Phosphoserine is present on Ser213. Position 240 (Lys240) interacts with substrate. Residue Glu242 participates in Mn(2+) binding. A Glycyl lysine isopeptide (Lys-Gly) (interchain with G-Cter in ubiquitin) cross-link involves residue Lys255. Substrate contacts are provided by Gly265 and Asp266. Asp266 lines the Mn(2+) pocket. Lys292 is covalently cross-linked (Glycyl lysine isopeptide (Lys-Gly) (interchain with G-Cter in URM1)). Thr298 lines the substrate pocket. Position 316 is a phosphoserine (Ser316). Lys394 participates in a covalent cross-link: Glycyl lysine isopeptide (Lys-Gly) (interchain with G-Cter in URM1). A beta-D-fructose 1,6-bisphosphate-binding site is contributed by 402–407; it reads STSGTT. Residue Cys418 is modified to Cysteine persulfide. Lys446 participates in a covalent cross-link: Glycyl lysine isopeptide (Lys-Gly) (interchain with G-Cter in ubiquitin); alternate. Lys446 participates in a covalent cross-link: Glycyl lysine isopeptide (Lys-Gly) (interchain with G-Cter in URM1); alternate. Ser450 is modified (phosphoserine). Residues Trp452 and Arg459 each coordinate beta-D-fructose 1,6-bisphosphate. Position 478 is a phosphothreonine (Thr478). A beta-D-fructose 1,6-bisphosphate-binding site is contributed by Gly484.

It belongs to the pyruvate kinase family. As to quaternary structure, homotetramer. It depends on Mg(2+) as a cofactor. The cofactor is K(+). Conjugated to URM1, a ubiquitin-like protein, in response to oxidative stresses. The attachment of URM1 to lysine residues exclusively depends on the presence of a peroxidatic cysteine in the target protein, with low specificity for the particular residue, motif, or structural context at which urmylation can occur. The URM1-conjugation reaction is mechanistically and directly coupled to the process of cysteine persulfidation, transfering the sulfur atom of the URM1 thiocarboxyl group to redox-active cysteine residues in the target protein if it is exposed to oxidative conditions. In terms of processing, persulfidated on specific redox-active cysteine residues. Persulfidation (also called protein S-sulfhydration) may provide a molecular mechanism that enables cells to protect vulnerable cysteine residues from reactive oxygen species (ROS) under stress conditions.

It carries out the reaction pyruvate + ATP = phosphoenolpyruvate + ADP + H(+). It functions in the pathway carbohydrate degradation; glycolysis; pyruvate from D-glyceraldehyde 3-phosphate: step 5/5. The activity is regulated by glucose levels. Activated by fructose-1,6-bisphosphate. In Saccharomyces cerevisiae (strain ATCC 204508 / S288c) (Baker's yeast), this protein is Pyruvate kinase 1 (CDC19).